Here is a 506-residue protein sequence, read N- to C-terminus: MLGFLSRLGLWASGLILILGFLKLLRLLLRRQRLARAMDSFPGPPTHWLFGHALEIQKTGSLDKVVTWTQQFPYAHPLWVGQFIGFLNIYEPDYAKAVYSRGDPKAPDVYDFFLQWIGKGLLVLDGPKWFQHRKLLTPGFHYDVLKPYVAIFADSTRIMLEKWEKKACEGKSFDIFSDVGHMALDTLMKCTFGKGDSGLNHRDSSYYVAVSELTLLMQQRIDSFQYHNDFIYWLTPHGRRFLRACRAAHDHTDRVIRQRKAALQDEKEREKIQNRRHLDFLDILLDVRGESGVQLSDTDLRAEVDTFMFEGHDTTTSGISWFLYCMALYPEHQQRCREEVREILGDQDSFQWEDLAKMTYLTMCMKECFRLYPPVPQVYRQLSKPVSFVDGRSLPAGSLISLHIYALHRNSDVWPDPEVFDPLRFSPENSSGRHPYAFIPFSAGPRNCIGQQFAMNEMKVVTALCLLRFEFSVDPLRLPIKLPQLVLRSKNGIHLYLKPLGPKAEK.

Residue glutamate 310 coordinates heme. At serine 431 the chain carries Phosphoserine. Heme is bound at residue cysteine 448.

Belongs to the cytochrome P450 family. Heme serves as cofactor.

It localises to the endoplasmic reticulum membrane. Its subcellular location is the microsome membrane. The catalysed reaction is an organic molecule + reduced [NADPH--hemoprotein reductase] + O2 = an alcohol + oxidized [NADPH--hemoprotein reductase] + H2O + H(+). Cytochromes P450 are a group of heme-thiolate monooxygenases. In liver microsomes, this enzyme is involved in an NADPH-dependent electron transport pathway. It oxidizes a variety of structurally unrelated compounds, including steroids, fatty acids, and xenobiotics. This chain is Cytochrome P450 4B1 (CYP4B1), found in Oryctolagus cuniculus (Rabbit).